The following is a 515-amino-acid chain: Cytoplasmic tRNA 2-thiolation protein 2 (515 aa).

Disordered stretches follow at residues 1 to 24 (MCQVGEDYGEPAPEEPPPAPRPSR) and 188 to 217 (LGAGGGPGPTQGEEQPPQPPLDPQNLARPP). Cysteine 2 bears the N-acetylcysteine mark. 4 positions are modified to phosphoserine: serine 415, serine 419, serine 435, and serine 508.

Belongs to the CTU2/NCS2 family. As to quaternary structure, component of a complex at least composed of URM1, CTU2/NCS2 and CTU1/ATPBD3.

The protein resides in the cytoplasm. Its pathway is tRNA modification; 5-methoxycarbonylmethyl-2-thiouridine-tRNA biosynthesis. Functionally, plays a central role in 2-thiolation of mcm(5)S(2)U at tRNA wobble positions of tRNA(Lys), tRNA(Glu) and tRNA(Gln). May act by forming a heterodimer with CTU1/ATPBD3 that ligates sulfur from thiocarboxylated URM1 onto the uridine of tRNAs at wobble position. This Homo sapiens (Human) protein is Cytoplasmic tRNA 2-thiolation protein 2.